Reading from the N-terminus, the 118-residue chain is Aspartate 1-decarboxylase 1 (118 aa).

S25 acts as the Schiff-base intermediate with substrate; via pyruvic acid in catalysis. Residue S25 is modified to Pyruvic acid (Ser). T57 is a substrate binding site. Y58 acts as the Proton donor in catalysis. 73-75 (GAA) contributes to the substrate binding site.

The protein belongs to the PanD family. In terms of assembly, heterooctamer of four alpha and four beta subunits. Pyruvate is required as a cofactor. Post-translationally, is synthesized initially as an inactive proenzyme, which is activated by self-cleavage at a specific serine bond to produce a beta-subunit with a hydroxyl group at its C-terminus and an alpha-subunit with a pyruvoyl group at its N-terminus.

It localises to the cytoplasm. The catalysed reaction is L-aspartate + H(+) = beta-alanine + CO2. It participates in cofactor biosynthesis; (R)-pantothenate biosynthesis; beta-alanine from L-aspartate: step 1/1. In terms of biological role, catalyzes the pyruvoyl-dependent decarboxylation of aspartate to produce beta-alanine. The protein is Aspartate 1-decarboxylase 1 of Gloeobacter violaceus (strain ATCC 29082 / PCC 7421).